The chain runs to 984 residues: MADKITREEKTIATLDLVLRVVVDAGNWDVFSKRLVRYTREQYGIELPEDIGDLPDTSEVSKVLLSHLGEDKAVLSAYRIAELTQPSEMDRAKVTEGGLAVLNASRDESEAQNPSNPEPESIESDAVEDLGVAAESDPSDDEPDPEPEYDHREADHDSDADSGYYSADGGRPGTPVDEEPQDDSPSSEETASTVIEEAQTSASNDSHDDDTHRDDGSASEEDLERDALVAPADPFPNLRKCFERQAMMLTGALKDAADTADPPETLSVDSVQRQLERFVFNPDRRVPAEHLEVRYNFYPPFLTPKAIASYHIFAVTASIPLSCKANRSGSDLLAKAKESTFFKRLPKWRLGIEIDDGLGTEVTAVTELEEAKMVPLKDDVSRLQWAKMRGEHIRFFSYPSLHMPPKISRMLMETLLQPFADENQKAEEALPCLSDEEVLAIVDPTGRLHGEDALKAVEKRRAAVTMAVRYTATLELMERVFREPSMVKKMQEVLHHTFHHGFVALVRETAKVNLSNYATFHGLTYNNPLNNCIMSKLLEGADKEDYVVDSIYLFLVLTWQTAMGMWQQAIDDMTIQMYTEVFTKNKYRLYSLPNPTAIGKAIVDILMDYDRLTEEMRKALPNFTCQSQITAFRHFLLERSNIPAVAAPFMPSDFVPLAYKQSPPLLWDQVYLLQLAFYLTKHGGYLWEAPEEEANNPSNRTYCPCNLCSPHRMPGHNAALHNEILAIGTFEIRSPDGKTFKLTPELWTNAYLDKFDAEDFHPFTVFHYPENASRFASTLKACVTQSPEILSLIRQIQESREEFLLTKGKGVYKDPNTGETISRQPRDTARAQHAGDGQALPAPGAYTTGGNRAETAPAGAVRLAPDYQDGQFPIAKVGPHYHGPKNVRREDQGYRGGPGGVRGEREVVLSRRAGGRRFGRRNTRQSGYNERANRYFGRGGGGSVRGQQGEHPTTSPSASEPPAPSRILARGTPPSPERRDRQEE.

Residues 131 to 231 (GVAAESDPSD…DLERDALVAP (101 aa)) are disordered. Positions 137 to 147 (DPSDDEPDPEP) are enriched in acidic residues. A compositionally biased stretch (basic and acidic residues) spans 148-159 (EYDHREADHDSD). Acidic residues predominate over residues 176–186 (VDEEPQDDSPS). A compositionally biased stretch (polar residues) spans 190-202 (TASTVIEEAQTSA). Residues 205-216 (DSHDDDTHRDDG) are compositionally biased toward basic and acidic residues. The interval 411–476 (LMETLLQPFA…AVRYTATLEL (66 aa)) is binding to host EIF4G. The RRM domain maps to 479–597 (RVFREPSMVK…RLYSLPNPTA (119 aa)). Disordered regions lie at residues 810–853 (GVYK…GNRA) and 876–984 (KVGP…RQEE). Tyr-812 bears the Phosphotyrosine; by host mark. Positions 913–923 (AGGRRFGRRNT) are enriched in basic residues. The segment covering 945–958 (RGQQGEHPTTSPSA) has biased composition (low complexity).

It belongs to the adenoviridae shutoff protein family. In terms of assembly, monomer. Interacts with hexon protein; this interaction allows chaperoning and trimerization of hexon proteins. Interacts (via N-terminus) with host initiation factor EIF4G (via C-terminus). Interacts (via RRM domain) with viral mRNAs that contain the tripartite leader; this interaction allows ribosome shunting and expression of viral late mRNAs. Might be cleaved by the viral protease. In terms of processing, phosphorylated. Tyrosine phosphorylation enhances preferential binding to tripartite leader mRNAs and allows ribosome shunting. Post-translationally, methylated. Asymmetric dimethylation by host PRMT1 of the Arg/Gly-rich region may regulate shutoff protein binding to hexon and promote the capsid assembly in the nucleus.

It is found in the host cytoplasm. Its function is as follows. Protein that inhibits host translation while promoting late viral translation by ribosome shunting. Blocks host cap-dependent translation by binding to eIF4G, displacing MKNK1 from cap initiation complexes and preventing EIF4E phosphorylation. Binds to the tripartite leader sequence of viral late mRNAs and recruits host eIF4G, PABPC1/poly-A binding protein and 40S ribosomes subunits on viral mRNAs, allowing ribosome shunting and efficient translation of late viral mRNAs even though conventional translation via ribosome scanning from the cap has been shut off in the host cell. During assembly, acts as a chaperone protein that helps hexon proteins assembly into trimers. This Galliformes (FAdV-1) protein is Shutoff protein.